The following is a 434-amino-acid chain: Magnesium transporter MRS2 homolog, mitochondrial (434 aa).

A mitochondrion-targeting transit peptide spans 1–53 (MECLRCLPGLLPRAAQPRRALWTAVARLSLAACGGRATPLRSRSPKASSTARA). Residues 54-330 (AGDVLRFRTS…SHRNVMMRLN (277 aa)) are Mitochondrial matrix-facing. Residues E234, T237, D238, E303, and D320 each coordinate Mg(2+). Residues 331-350 (LQLTMGTFSLSLFGLMGVAF) form a helical membrane-spanning segment. G351 and N353 together coordinate Mg(2+). The GMN motif motif lies at 351-353 (GMN). Residues 351-361 (GMNLESSLEED) are Mitochondrial intermembrane-facing. The helical transmembrane segment at 362–392 (HRVFWLVTGIMFMGSGLIWRRLLSFLGRQLE) threads the bilayer. Residues 393 to 434 (APVPPVMTSLPKKTLLANRRMDVKNSLRPEGLGASRTILASR) lie on the Mitochondrial matrix side of the membrane.

Belongs to the CorA metal ion transporter (MIT) (TC 1.A.35) family. Homopentamer. Ubiquitously expressed.

The protein localises to the mitochondrion inner membrane. Its activity is regulated as follows. May be regulated by calcium ions. Magnesium transporter that mediates the influx of magnesium into the mitochondrial matrix and regulates magnesium metabolism. Also permeable to calcium, sodium and potassium ions. Required for normal expression of the mitochondrial respiratory complex I subunits. May play a role in maintaining the inner mitochondrial membrane potential. The chain is Magnesium transporter MRS2 homolog, mitochondrial (Mrs2) from Mus musculus (Mouse).